A 224-amino-acid chain; its full sequence is Myogenin (224 aa).

Phosphoserine; by CaMK2G occurs at positions 77 and 79. The bHLH domain occupies 81 to 132 (DRRRAATLREKRRLKKVNEAFEALKRSTLLNPNQRLPKVEILRSAIQYIERL). At Thr87 the chain carries Phosphothreonine; by CaMK2G.

As to quaternary structure, homodimer and heterodimer with E12; heterodimerization enhances MYOG DNA-binding and transcriptional activities. Interacts with SMARCA4/BRG1/BAF190A. Interacts (via C-terminal region) with SSRP1 and SUPT16H; the interaction is indicative of an interaction with the FACT complex. Interacts with CSRP3. Phosphorylated by CAMK2G on threonine and serine amino acids in a muscle activity-dependent manner. Phosphorylation of Thr-87 impairs both DNA-binding and trans-activation functions in contracting muscles.

The protein localises to the nucleus. Functionally, acts as a transcriptional activator that promotes transcription of muscle-specific target genes and plays a role in muscle differentiation, cell cycle exit and muscle atrophy. Essential for the development of functional embryonic skeletal fiber muscle differentiation. However is dispensable for postnatal skeletal muscle growth; phosphorylation by CAMK2G inhibits its transcriptional activity in respons to muscle activity. Required for the recruitment of the FACT complex to muscle-specific promoter regions, thus promoting gene expression initiation. During terminal myoblast differentiation, plays a role as a strong activator of transcription at loci with an open chromatin structure previously initiated by MYOD1. Together with MYF5 and MYOD1, co-occupies muscle-specific gene promoter core regions during myogenesis. Also cooperates with myocyte-specific enhancer factor MEF2D and BRG1-dependent recruitment of SWI/SNF chromatin-remodeling enzymes to alter chromatin structure at myogenic late gene promoters. Facilitates cell cycle exit during terminal muscle differentiation through the up-regulation of miR-20a expression, which in turn represses genes involved in cell cycle progression. Binds to the E-box containing (E1) promoter region of the miR-20a gene. Also plays a role in preventing reversal of muscle cell differentiation. Contributes to the atrophy-related gene expression in adult denervated muscles. Induces fibroblasts to differentiate into myoblasts. The chain is Myogenin (MYOG) from Homo sapiens (Human).